The chain runs to 363 residues: DNA replication and repair protein RecF (363 aa).

Residue 30–37 (GPNGSGKT) participates in ATP binding.

This sequence belongs to the RecF family.

Its subcellular location is the cytoplasm. In terms of biological role, the RecF protein is involved in DNA metabolism; it is required for DNA replication and normal SOS inducibility. RecF binds preferentially to single-stranded, linear DNA. It also seems to bind ATP. The protein is DNA replication and repair protein RecF of Vibrio cholerae serotype O1 (strain ATCC 39541 / Classical Ogawa 395 / O395).